We begin with the raw amino-acid sequence, 578 residues long: Triokinase/FMN cyclase (578 aa).

Positions 9 to 336 (SVEGCADDAL…IDAETTAKAW (328 aa)) constitute a DhaK domain. Dihydroxyacetone contacts are provided by residues 56 to 59 (GSGH), Lys109, and Asp114. The active-site Tele-hemiaminal-histidine intermediate is His221. One can recognise a DhaL domain in the interval 372 to 571 (KQMALVLDRI…AAAIFRAILE (200 aa)). ATP contacts are provided by residues 401-404 (DGDC), 446-447 (SS), Gly486, and 494-495 (TM). Phosphoserine occurs at positions 511 and 545. ATP is bound at residue 556–558 (DPG).

Belongs to the dihydroxyacetone kinase (DAK) family. In terms of assembly, homodimer. Interacts with IFIH1 (via the CARD domains), the interaction is inhibited by viral infection. Requires Mg(2+) as cofactor. Mn(2+) is required as a cofactor. The cofactor is Co(2+).

It catalyses the reaction dihydroxyacetone + ATP = dihydroxyacetone phosphate + ADP + H(+). It carries out the reaction D-glyceraldehyde + ATP = D-glyceraldehyde 3-phosphate + ADP + H(+). The catalysed reaction is FAD = riboflavin cyclic-4',5'-phosphate + AMP + H(+). With respect to regulation, each activity is inhibited by the substrate(s) of the other. In terms of biological role, catalyzes both the phosphorylation of dihydroxyacetone and of glyceraldehyde, and the splitting of ribonucleoside diphosphate-X compounds among which FAD is the best substrate. Represses IFIH1-mediated cellular antiviral response. The protein is Triokinase/FMN cyclase of Mus musculus (Mouse).